The primary structure comprises 639 residues: Complex I assembly factor Egm, mitochondrial (639 aa).

The transit peptide at 1 to 26 directs the protein to the mitochondrion; the sequence is MRPNLFSGASRLLTYSRNGKLLTRGR. Residues 23 to 65 form a disordered region; sequence TRGRSTKATSSSLDSQHQDAATTEGGRAESVEESPEQQRKLPT. The span at 28–43 shows a compositional bias: polar residues; that stretch reads TKATSSSLDSQHQDAA. The segment covering 48–65 has biased composition (basic and acidic residues); it reads GRAESVEESPEQQRKLPT.

Belongs to the acyl-CoA dehydrogenase family. Associates with mitochondrial complex I assembly intermediates during its biogenesis. FAD is required as a cofactor.

It localises to the mitochondrion. As part of the MCIA complex, primarily participates in the assembly of the mitochondrial complex I and therefore plays a role in oxidative phosphorylation. The sequence is that of Complex I assembly factor Egm, mitochondrial from Drosophila melanogaster (Fruit fly).